Here is a 397-residue protein sequence, read N- to C-terminus: 1-deoxy-D-xylulose 5-phosphate reductoisomerase (397 aa).

NADPH contacts are provided by Thr10, Gly11, Ser12, Ile13, Gly36, Asn38, and Asn128. A 1-deoxy-D-xylulose 5-phosphate-binding site is contributed by Lys129. Glu130 is an NADPH binding site. Asp154 is a binding site for Mn(2+). 1-deoxy-D-xylulose 5-phosphate is bound by residues Ser155, Glu156, Ser180, and His203. Residue Glu156 coordinates Mn(2+). Gly209 provides a ligand contact to NADPH. The 1-deoxy-D-xylulose 5-phosphate site is built by Asn221, Lys222, and Glu225. Residue Glu225 participates in Mn(2+) binding.

This sequence belongs to the DXR family. Requires Mg(2+) as cofactor. Mn(2+) is required as a cofactor.

It catalyses the reaction 2-C-methyl-D-erythritol 4-phosphate + NADP(+) = 1-deoxy-D-xylulose 5-phosphate + NADPH + H(+). The protein operates within isoprenoid biosynthesis; isopentenyl diphosphate biosynthesis via DXP pathway; isopentenyl diphosphate from 1-deoxy-D-xylulose 5-phosphate: step 1/6. Its function is as follows. Catalyzes the NADPH-dependent rearrangement and reduction of 1-deoxy-D-xylulose-5-phosphate (DXP) to 2-C-methyl-D-erythritol 4-phosphate (MEP). This is 1-deoxy-D-xylulose 5-phosphate reductoisomerase from Solibacter usitatus (strain Ellin6076).